A 464-amino-acid polypeptide reads, in one-letter code: MGQILSNPVIDKESHSGADSLTAFGLCAMQGWRMSMEDSHILEPNVLTKSDKDHIAFYGIFDGHGGAKVAEYCGNKIVEILQEQKSFHEGNLPRALIDTFINTDVKLLQDPVMKEDHSGCTATSILVSKSQNLLVCGNAGDSRTVLATDGNAKALSYDHKPTLASEKSRIVAADGFVEMDRVNGNLALSRAIGDFEFKSNPKLGPEEQIVTCVPDILEHSLDYDRDEFVILACDGIWDCLTSQDCVDLVHLGLREGKTLNEISSRIIDVCCAPTTEGTGIGCDNMSIVVVALLKEGEDVAQWSDRMKSKAHRTSVRSFADKRRRVFSYYDFSKCNDEQVFAITTKKPQDKFTRDHEAAVASVTAADNDDPMDIDDTDADTDAENLDPSSQSKSKTSGPIDLASLEALLGATGGVKTDSNGNKVTYTLPQSALAQLLQTMGHDPASSHPENDSNTDHKAGRSHLQ.

Positions 23-292 constitute a PPM-type phosphatase domain; the sequence is AFGLCAMQGW…DNMSIVVVAL (270 aa). Mn(2+)-binding residues include Asp-62, Gly-63, Asp-234, and Asp-283. The interaction with IRE1 stretch occupies residues 174-355; it reads DGFVEMDRVN…KPQDKFTRDH (182 aa). 2 disordered regions span residues 361 to 398 and 434 to 464; these read SVTAADNDDPMDIDDTDADTDAENLDPSSQSKSKTSGP and QLLQTMGHDPASSHPENDSNTDHKAGRSHLQ. Residues 366 to 384 show a composition bias toward acidic residues; that stretch reads DNDDPMDIDDTDADTDAEN. Phosphothreonine is present on residues Thr-376 and Thr-380. Residues 386–396 show a composition bias toward polar residues; the sequence is DPSSQSKSKTS. Basic and acidic residues predominate over residues 448 to 458; it reads PENDSNTDHKA.

It belongs to the PP2C family. In terms of assembly, interacts with IRE1 (when phosphorylated); the interaction is direct and serves to attenuate the endoplasmic reticulum unfolded protein response. Interacts (when phosphorylated) with RAD53 (via domain FHA 1); the interaction is direct and serves to regulate DNA damage checkpoint signaling. Interacts with the ATG17-ATG29-ATG31 and ATG1-ATG13 supercomplex; to regulate induction of autophagy. Mg(2+) serves as cofactor. Mn(2+) is required as a cofactor.

The protein localises to the nucleus. Its subcellular location is the cytoplasm. It is found in the cytosol. The enzyme catalyses O-phospho-L-seryl-[protein] + H2O = L-seryl-[protein] + phosphate. The catalysed reaction is O-phospho-L-threonyl-[protein] + H2O = L-threonyl-[protein] + phosphate. Functionally, dephosphorylating regulator for many key proteins. Dephosphorylates the cell cycle master regulator CDC28/cyclin-dependent kinase 1; its activity appears redundant with phosphatase PTC3. Dephosphorylates HOG1 at 'Thr-171', to attenuate activation of the stress-activated p38MAPK cascade; its activity appears redundant with phosphatase PTC3. Positively regulates both nonselective macroautophagy as well as the selective cytoplasm-to-vacuole (cvt) autophagy pathway and the genotoxin-induced targeted autophagy (GTA) pathway, possibly by dephosphorylating ATG13 to enable the interaction between the ATG17-ATG29-ATG31 and ATG1-ATG13 complexes; its activity appears redundant with phosphatase PTC3. Dephosphorylates RAD53, to regulate DNA damage checkpoint signaling. Dephosphorylates IRE1, to negatively regulate the endoplasmic reticulum unfolded protein response. The sequence is that of Protein phosphatase 2C homolog 2 (PTC2) from Saccharomyces cerevisiae (strain ATCC 204508 / S288c) (Baker's yeast).